We begin with the raw amino-acid sequence, 901 residues long: Alanine--tRNA ligase (901 aa).

Residues His581, His585, Cys684, and His688 each contribute to the Zn(2+) site.

Belongs to the class-II aminoacyl-tRNA synthetase family. Zn(2+) is required as a cofactor.

Its subcellular location is the cytoplasm. The enzyme catalyses tRNA(Ala) + L-alanine + ATP = L-alanyl-tRNA(Ala) + AMP + diphosphate. In terms of biological role, catalyzes the attachment of alanine to tRNA(Ala) in a two-step reaction: alanine is first activated by ATP to form Ala-AMP and then transferred to the acceptor end of tRNA(Ala). Also edits incorrectly charged Ser-tRNA(Ala) and Gly-tRNA(Ala) via its editing domain. This Mycobacterium marinum (strain ATCC BAA-535 / M) protein is Alanine--tRNA ligase.